The primary structure comprises 359 residues: Beta-1,3-galactosyltransferase bre-2 (359 aa).

Residues 1-11 (MRQSRRASSRV) lie on the Cytoplasmic side of the membrane. Residues 12–29 (NRLVVIFIIVASGFLLLY) traverse the membrane as a helical; Signal-anchor for type II membrane protein segment. Topologically, residues 30-359 (KNTQQFTQID…NPDLEELKEK (330 aa)) are lumenal. Asn73, Asn163, and Asn209 each carry an N-linked (GlcNAc...) asparagine glycan.

Belongs to the glycosyltransferase 31 family.

It localises to the golgi apparatus membrane. Its pathway is protein modification; protein glycosylation. In terms of biological role, transfers N-acetylgalactosamine onto carbohydrate substrates. Involved in susceptibility to pore-forming crystal toxins in conjunction with bre-1, bre-3, bre-4, and bre-5. Involved in resistance to the nematotoxic C.cinerea galectin Cgl2. In Caenorhabditis elegans, this protein is Beta-1,3-galactosyltransferase bre-2.